A 230-amino-acid polypeptide reads, in one-letter code: Extracellular deoxyribonuclease (230 aa).

The N-terminal stretch at 1 to 20 is a signal peptide; it reads MFRPLLSLCLALLVSAPAHA.

The protein belongs to the EndA/NucM nuclease family.

Its subcellular location is the secreted. The protein is Extracellular deoxyribonuclease (dns) of Aeromonas hydrophila.